Reading from the N-terminus, the 743-residue chain is Catalase-peroxidase (743 aa).

Residues 1-22 form a disordered region; the sequence is MEKQSNDAAVAGAPNDHGAAKC. The tryptophyl-tyrosyl-methioninium (Trp-Tyr) (with M-253) cross-link spans 105–227; it reads WHSAGTYRIT…LGAVQMGLIY (123 aa). H106 functions as the Proton acceptor in the catalytic mechanism. Residues 227 to 253 constitute a cross-link (tryptophyl-tyrosyl-methioninium (Tyr-Met) (with W-105)); the sequence is YVNPEGPNGNPDPVAAAKDIRETFFRM. H268 lines the heme b pocket.

It belongs to the peroxidase family. Peroxidase/catalase subfamily. Homodimer or homotetramer. The cofactor is heme b. In terms of processing, formation of the three residue Trp-Tyr-Met cross-link is important for the catalase, but not the peroxidase activity of the enzyme.

The catalysed reaction is H2O2 + AH2 = A + 2 H2O. The enzyme catalyses 2 H2O2 = O2 + 2 H2O. In terms of biological role, bifunctional enzyme with both catalase and broad-spectrum peroxidase activity. This is Catalase-peroxidase from Solibacter usitatus (strain Ellin6076).